Reading from the N-terminus, the 236-residue chain is Small ribosomal subunit protein uS2c (236 aa).

The protein belongs to the universal ribosomal protein uS2 family.

The protein resides in the plastid. The protein localises to the chloroplast. This is Small ribosomal subunit protein uS2c (rps2) from Phalaenopsis aphrodite subsp. formosana (Moth orchid).